A 141-amino-acid polypeptide reads, in one-letter code: UPF0225 protein Rmet_0111 (141 aa).

The protein belongs to the UPF0225 family.

The polypeptide is UPF0225 protein Rmet_0111 (Cupriavidus metallidurans (strain ATCC 43123 / DSM 2839 / NBRC 102507 / CH34) (Ralstonia metallidurans)).